A 220-amino-acid polypeptide reads, in one-letter code: Flavin-dependent thymidylate synthase (220 aa).

The ThyX domain occupies 1–208 (MKIDILDKGF…PWTFEAFLKY (208 aa)). FAD is bound by residues threonine 55, 78–80 (RHR), and glutamate 86. DUMP contacts are provided by residues 75-78 (QWFR), 86-90 (ELSGR), and arginine 147. Residues 78–88 (RHRIASYNELS) carry the ThyX motif motif. FAD-binding positions include 163 to 165 (NAR) and asparagine 169. Arginine 174 provides a ligand contact to dUMP. The active-site Involved in ionization of N3 of dUMP, leading to its activation is arginine 174.

It belongs to the thymidylate synthase ThyX family. In terms of assembly, homotetramer. FAD is required as a cofactor.

The catalysed reaction is dUMP + (6R)-5,10-methylene-5,6,7,8-tetrahydrofolate + NADPH + H(+) = dTMP + (6S)-5,6,7,8-tetrahydrofolate + NADP(+). Its pathway is pyrimidine metabolism; dTTP biosynthesis. Catalyzes the reductive methylation of 2'-deoxyuridine-5'-monophosphate (dUMP) to 2'-deoxythymidine-5'-monophosphate (dTMP) while utilizing 5,10-methylenetetrahydrofolate (mTHF) as the methyl donor, and NADPH and FADH(2) as the reductant. This chain is Flavin-dependent thymidylate synthase, found in Thermotoga sp. (strain RQ2).